A 188-amino-acid chain; its full sequence is UPF0157 protein DR_2534 (188 aa).

Over residues 1–12 (MGRGGRGVGGGR) the composition is skewed to gly residues. Residues 1 to 37 (MGRGGRGVGGGRPEGHGASVEGGRTRQTEGMDLISPD) form a disordered region.

Belongs to the UPF0157 (GrpB) family.

The sequence is that of UPF0157 protein DR_2534 from Deinococcus radiodurans (strain ATCC 13939 / DSM 20539 / JCM 16871 / CCUG 27074 / LMG 4051 / NBRC 15346 / NCIMB 9279 / VKM B-1422 / R1).